A 202-amino-acid polypeptide reads, in one-letter code: dTTP/UTP pyrophosphatase (202 aa).

Asp71 acts as the Proton acceptor in catalysis.

It belongs to the Maf family. YhdE subfamily. A divalent metal cation is required as a cofactor.

The protein localises to the cytoplasm. The enzyme catalyses dTTP + H2O = dTMP + diphosphate + H(+). It carries out the reaction UTP + H2O = UMP + diphosphate + H(+). Its function is as follows. Nucleoside triphosphate pyrophosphatase that hydrolyzes dTTP and UTP. May have a dual role in cell division arrest and in preventing the incorporation of modified nucleotides into cellular nucleic acids. This chain is dTTP/UTP pyrophosphatase, found in Zymomonas mobilis subsp. mobilis (strain ATCC 31821 / ZM4 / CP4).